The following is a 307-amino-acid chain: MSIGCKLISGREVAESIIDQVKAHTVALSANGITPGLAVIIVGSDPASQVYVASKGRKAEECGFLSIKHELPHDVPERRLLELIDSLNADPSIHGILVQLPLPRHVDSGKVIQAISPQKDIDGFHFINVGKLGTGALETAFVPCTPAGCMILVERIHGKDLSGLSAVVVGRSNIVGKPMANLLLAANATVTIAHSRTANLEVLCRQADILIAAVGRPEMIRSDWIKPGATVIDVGINRIASRDDGGKTRLVGDVDFDGAVERAGAVTPVPGGVGPMTIAMLMANTLRAACHANDEPAPHFGSGGVLR.

NADP(+) is bound by residues 170–172 (GRS), Ser-195, and Ile-236.

The protein belongs to the tetrahydrofolate dehydrogenase/cyclohydrolase family. As to quaternary structure, homodimer.

The enzyme catalyses (6R)-5,10-methylene-5,6,7,8-tetrahydrofolate + NADP(+) = (6R)-5,10-methenyltetrahydrofolate + NADPH. It catalyses the reaction (6R)-5,10-methenyltetrahydrofolate + H2O = (6R)-10-formyltetrahydrofolate + H(+). The protein operates within one-carbon metabolism; tetrahydrofolate interconversion. In terms of biological role, catalyzes the oxidation of 5,10-methylenetetrahydrofolate to 5,10-methenyltetrahydrofolate and then the hydrolysis of 5,10-methenyltetrahydrofolate to 10-formyltetrahydrofolate. The polypeptide is Bifunctional protein FolD (Sinorhizobium fredii (strain NBRC 101917 / NGR234)).